The sequence spans 542 residues: 3-(3-hydroxy-phenyl)propionate/3-hydroxycinnamic acid hydroxylase (542 aa).

Residues 10 to 39 (SVAIVGAGPNGAAMANLLGLYGVDTIVVER) and 278 to 288 (FVAGRVALIGD) each bind FAD.

Belongs to the PheA/TfdB FAD monooxygenase family. It depends on FAD as a cofactor.

The enzyme catalyses 3-(3-hydroxyphenyl)propanoate + NADH + O2 + H(+) = 3-(2,3-dihydroxyphenyl)propanoate + NAD(+) + H2O. It carries out the reaction (2E)-3-(3-hydroxyphenyl)prop-2-enoate + NADH + O2 + H(+) = (2E)-3-(2,3-dihydroxyphenyl)prop-2-enoate + NAD(+) + H2O. It functions in the pathway aromatic compound metabolism; 3-phenylpropanoate degradation. Functionally, catalyzes the insertion of one atom of molecular oxygen into position 2 of the phenyl ring of 3-(3-hydroxyphenyl)propionate (3-HPP) and hydroxycinnamic acid (3HCI). This is 3-(3-hydroxy-phenyl)propionate/3-hydroxycinnamic acid hydroxylase from Burkholderia cenocepacia (strain HI2424).